We begin with the raw amino-acid sequence, 396 residues long: Probable sugar efflux transporter (396 aa).

The next 12 helical transmembrane spans lie at 15-35, 50-70, 81-101, 103-123, 136-156, 170-190, 209-229, 246-266, 275-295, 299-319, 333-353, and 364-384; these read VVTLAVAAFIFNTTEFVPVGL, VGIMLTIYAWVVALMSLPFML, LICLFVVFIASHVLSFLSWSF, VLVISRIGVAFAHAIFWSITA, AQALSLIATGTALAMVLGLPL, FFAIGIGALITLLCLIKLLPL, PALMSIYLLTVVVVTAHYTAY, FATALLLLLGGAGIIGSVIFG, ALVSTAIALLLVCLALLLPAA, IHLGMLSIFWGIAMMIIGLGM, VAMALFSGIFNIGIGAGALVG, and MIGYVGAVPAFAALIWSIIIF.

Belongs to the major facilitator superfamily. SotB (TC 2.A.1.2) family.

It localises to the cell inner membrane. Involved in the efflux of sugars. The physiological role may be the reduction of the intracellular concentration of toxic sugars or sugar metabolites. This chain is Probable sugar efflux transporter, found in Escherichia coli O6:K15:H31 (strain 536 / UPEC).